We begin with the raw amino-acid sequence, 664 residues long: uncharacterized protein (664 aa).

This is an uncharacterized protein from Mycoplasma pneumoniae (strain ATCC 29342 / M129 / Subtype 1) (Mycoplasmoides pneumoniae).